Here is a 223-residue protein sequence, read N- to C-terminus: Interleukin-12 subunit alpha (223 aa).

An N-terminal signal peptide occupies residues 1–23; the sequence is MCPSARSLLLLASLVLLEHLGSA. N-linked (GlcNAc...) asparagine glycosylation is found at asparagine 41, asparagine 79, asparagine 121, and asparagine 176. 2 disulfide bridges follow: cysteine 66–cysteine 200 and cysteine 87–cysteine 125.

Belongs to the IL-6 superfamily. Heterodimer with IL12B; disulfide-linked. This heterodimer is known as interleukin IL-12. Heterodimer with EBI3/IL27B; not disulfide-linked. This heterodimer is known as interleukin IL-35. Interacts with NBR1; this interaction promotes IL-12 secretion.

The protein resides in the secreted. Heterodimerizes with IL12B to form the IL-12 cytokine or with EBI3/IL27B to form the IL-35 cytokine. IL-12 is primarily produced by professional antigen-presenting cells (APCs) such as B-cells and dendritic cells (DCs) as well as macrophages and granulocytes and regulates T-cell and natural killer-cell responses, induces the production of interferon-gamma (IFN-gamma), favors the differentiation of T-helper 1 (Th1) cells and is an important link between innate resistance and adaptive immunity. Mechanistically, exerts its biological effects through a receptor composed of IL12R1 and IL12R2 subunits. Binding to the receptor results in the rapid tyrosine phosphorylation of a number of cellular substrates including the JAK family kinases TYK2 and JAK2. In turn, recruited STAT4 gets phosphorylated and translocates to the nucleus where it regulates cytokine/growth factor responsive genes. As part of IL-35, plays essential roles in maintaining the immune homeostasis of the liver microenvironment and also functions as an immune-suppressive cytokine. Mediates biological events through unconventional receptors composed of IL12RB2 and gp130/IL6ST heterodimers or homodimers. Signaling requires the transcription factors STAT1 and STAT4, which form a unique heterodimer that binds to distinct DNA sites. The polypeptide is Interleukin-12 subunit alpha (IL12A) (Marmota monax (Woodchuck)).